The sequence spans 707 residues: MAREYPLERYRNFGIMAHIDAGKTTTTERILFYTGKNHKMGETHEGASTMDWMEQEAERGITITSAATTTFWQRHEDADFTPDDSERCRFNIIDTPGHVDFTIEVERSLAVLDGAICLLDGNAGVEPQTETVWRQADRYKVPRIVFVNKMDKIGADFFKCVAMIKDRTGGTPCPIALPIGAEDKLEGIVDLIKMEEWVWKGEDLGASWVRQPIRDELQDVAEEWRGKMIELAVEQDDEAMEAYLDGNEPDEATLRKLIRKGTLSLSFFPVMAGSAFKNKGVQPLLNAVVDFLPAPTDVPAYLGFAPGDETETRNIERSASDDQPFSALAFKIMNDPFVGSLTFTRIYSGQLKKGDQMLNATKGKRERVGRMMVMHAINREEIEEAFAGEIIALAGLKETTTGDTLCDPAKPVVLETMTFPEPVIEIAVEPKSKADQEKMGLALQRLAAEDPSFRVETDMESGQTIMKGMGELHLDILVDRMKREFKVEANIGAPQVAYRETISQPAEIDYTHKKQTGGTGQFARVKLQIEPTEPGEGYSFESKIVGGAVPKEYIPGVEKGIKSVMDSGPLAGFPVIDFKVALIDGAFHDVDSSVLAFEIAARAGMREGLKKAGAKLLEPIMRVEVVTPEEYTGSIIGDLTSRRGMVRGQDTRGNANVIDAFVPLANMFGYINNLRSMSSGRAVFTMQFDHYEAVPQNISDEIQKKYA.

Positions 8-296 (ERYRNFGIMA…AVVDFLPAPT (289 aa)) constitute a tr-type G domain. Residues 17–24 (AHIDAGKT), 94–98 (DTPGH), and 148–151 (NKMD) each bind GTP.

Belongs to the TRAFAC class translation factor GTPase superfamily. Classic translation factor GTPase family. EF-G/EF-2 subfamily.

It is found in the cytoplasm. In terms of biological role, catalyzes the GTP-dependent ribosomal translocation step during translation elongation. During this step, the ribosome changes from the pre-translocational (PRE) to the post-translocational (POST) state as the newly formed A-site-bound peptidyl-tRNA and P-site-bound deacylated tRNA move to the P and E sites, respectively. Catalyzes the coordinated movement of the two tRNA molecules, the mRNA and conformational changes in the ribosome. The protein is Elongation factor G of Paracoccus denitrificans (strain Pd 1222).